Here is an 848-residue protein sequence, read N- to C-terminus: Translation initiation factor IF-2 (848 aa).

Residues 1–265 (MSDTDGKKPL…GNQRAEKQVR (265 aa)) are disordered. The span at 89–162 (KAREVEEAAQ…AEIAKPKTEA (74 aa)) shows a compositional bias: basic and acidic residues. A compositionally biased stretch (low complexity) spans 163–179 (RPATPADRAAAEAAAVR). The segment covering 191–219 (RKTDRDRDTRGGGGDDRDSRNKGRDDSRR) has biased composition (basic and acidic residues). The tr-type G domain maps to 346 to 514 (PRAPIITIMG…AIALQAEILE (169 aa)). The segment at 355–362 (GHVDHGKT) is G1. 355–362 (GHVDHGKT) serves as a coordination point for GTP. The tract at residues 380 to 384 (GITQH) is G2. The segment at 402–405 (DTPG) is G3. GTP is bound by residues 402 to 406 (DTPGH) and 456 to 459 (NKID). Residues 456–459 (NKID) form a G4 region. Residues 492 to 494 (SAK) form a G5 region.

It belongs to the TRAFAC class translation factor GTPase superfamily. Classic translation factor GTPase family. IF-2 subfamily.

Its subcellular location is the cytoplasm. In terms of biological role, one of the essential components for the initiation of protein synthesis. Protects formylmethionyl-tRNA from spontaneous hydrolysis and promotes its binding to the 30S ribosomal subunits. Also involved in the hydrolysis of GTP during the formation of the 70S ribosomal complex. This Paracoccus denitrificans (strain Pd 1222) protein is Translation initiation factor IF-2.